The sequence spans 534 residues: Thromboxane-A synthase (534 aa).

Topologically, residues 1–10 (MEVLGFLSPE) are cytoplasmic. Residues 11–31 (LNGPMVTMALAVVLLALLKWY) traverse the membrane as a helical segment. Over 32-75 (STSAFSRLEKLGIRHPKPSPFIGNLTFFRQGFWESHMELRKQYG) the chain is Lumenal. A helical membrane pass occupies residues 76 to 96 (PLSGYYLGRRMIVVISDPDMI). Residues 97-223 (KQVLAEKFSN…RRFFAFSVPR (127 aa)) are Cytoplasmic-facing. A helical membrane pass occupies residues 224-244 (LILVLILSFPSIMVPLARILP). Over 245-336 (NKKRDEVNGF…LTVDEVVGQA (92 aa)) the chain is Lumenal. A helical transmembrane segment spans residues 337–357 (FLFLIAGYEIITNTLSFVTYL). The Cytoplasmic portion of the chain corresponds to 358 to 534 (LATNPDCQEK…NGVYIRIVPR (177 aa)). Residue cysteine 480 participates in heme binding.

Belongs to the cytochrome P450 family. As to quaternary structure, monomer. Heme is required as a cofactor. Expressed in lung, kidney and thymus.

It localises to the endoplasmic reticulum membrane. It carries out the reaction prostaglandin H2 = thromboxane A2. The enzyme catalyses prostaglandin H2 = (12S)-hydroxy-(5Z,8E,10E)-heptadecatrienoate + malonaldehyde. The catalysed reaction is a hydroperoxyeicosatetraenoate = an oxoeicosatetraenoate + H2O. It catalyses the reaction (15S)-hydroperoxy-(5Z,8Z,11Z,13E)-eicosatetraenoate = 15-oxo-(5Z,8Z,11Z,13E)-eicosatetraenoate + H2O. It carries out the reaction (15S)-hydroperoxy-(5Z,8Z,11Z,13E)-eicosatetraenoate + AH2 = (15S)-hydroxy-(5Z,8Z,11Z,13E)-eicosatetraenoate + A + H2O. Its function is as follows. Catalyzes the conversion of prostaglandin H2 (PGH2) to thromboxane A2 (TXA2), a potent inducer of blood vessel constriction and platelet aggregation. Also cleaves PGH2 to 12-hydroxy-heptadecatrienoicacid (12-HHT) and malondialdehyde, which is known to act as a mediator of DNA damage. 12-HHT and malondialdehyde are formed stoichiometrically in the same amounts as TXA2. Additionally, displays dehydratase activity, toward (15S)-hydroperoxy-(5Z,8Z,11Z,13E)-eicosatetraenoate (15(S)-HPETE) producing 15-KETE and 15-HETE. This Sus scrofa (Pig) protein is Thromboxane-A synthase (TBXAS1).